Here is a 345-residue protein sequence, read N- to C-terminus: Phosphoribosylformylglycinamidine cyclo-ligase (345 aa).

Belongs to the AIR synthase family.

Its subcellular location is the cytoplasm. It catalyses the reaction 2-formamido-N(1)-(5-O-phospho-beta-D-ribosyl)acetamidine + ATP = 5-amino-1-(5-phospho-beta-D-ribosyl)imidazole + ADP + phosphate + H(+). It functions in the pathway purine metabolism; IMP biosynthesis via de novo pathway; 5-amino-1-(5-phospho-D-ribosyl)imidazole from N(2)-formyl-N(1)-(5-phospho-D-ribosyl)glycinamide: step 2/2. This is Phosphoribosylformylglycinamidine cyclo-ligase from Anaeromyxobacter dehalogenans (strain 2CP-C).